The following is a 232-amino-acid chain: BTB/POZ domain-containing protein KCTD11 (232 aa).

The BTB domain occupies Met1–Leu49.

As to quaternary structure, homopentamer. Interacts with KCTD6 and KCTD21; KCTD11 and KCTD6 or KCTD21 may associate in pentameric assemblies. Component of the BCR(KCTD11) E3 ubiquitin ligase complex, at least composed of CUL3 and KCTD11 and RBX1. Interacts (via BTB domain) with CUL3; initially a 4:4 stoichiometry has been reported, however, electron microscopy revealed pentameric states of the BTB domain.

It functions in the pathway protein modification; protein ubiquitination. Functionally, plays a role as a marker and a regulator of neuronal differentiation; Up-regulated by a variety of neurogenic signals, such as retinoic acid, epidermal growth factor/EGF and NGFB/nerve growth factor. Induces apoptosis, growth arrest and the expression of cyclin-dependent kinase inhibitor CDKN1B. Plays a role as a tumor repressor and inhibits cell growth and tumorigenicity of medulloblastoma (MDB). Acts as a probable substrate-specific adapter for a BCR (BTB-CUL3-RBX1) E3 ubiquitin-protein ligase complex towards HDAC1. Functions as antagonist of the Hedgehog pathway on cell proliferation and differentiation by affecting the nuclear transfer of transcription factor GLI1, thus maintaining cerebellar granule cells in undifferentiated state, this effect probably occurs via HDAC1 down-regulation, keeping GLI1 acetylated and inactive. This Bos taurus (Bovine) protein is BTB/POZ domain-containing protein KCTD11 (KCTD11).